A 657-amino-acid chain; its full sequence is Tetracycline resistance protein TetQ (657 aa).

In terms of domain architecture, tr-type G spans 17 to 260; sequence MNIINLGILA…AISSFILPPE (244 aa). GTP contacts are provided by residues 26 to 33, 90 to 94, and 144 to 147; these read AHIDAGKT, DTPGH, and NKID.

It belongs to the TRAFAC class translation factor GTPase superfamily. Classic translation factor GTPase family. TetM/TetO subfamily.

Its function is as follows. Abolishes the inhibitory effect of tetracycline on protein synthesis by non-covalently modifying ribosomes. Confers mild resistance to tetracycline when expressed in E.coli. In Bacteroides fragilis, this protein is Tetracycline resistance protein TetQ (tetQ).